The chain runs to 655 residues: Bifunctional lysine-specific demethylase and histidyl-hydroxylase NO66 (655 aa).

Residues 1–16 show a composition bias toward polar residues; sequence MEKVTNSAAAKPQGNN. Disordered stretches follow at residues 1–48 and 67–122; these read MEKV…LSDM and EDTD…QGAS. Over residues 76–86 the composition is skewed to low complexity; that stretch reads STSSKEAAAAK. The span at 87-96 shows a compositional bias: basic and acidic residues; the sequence is TADHERRLQA. A Phosphoserine modification is found at Ser-131. Phosphothreonine is present on Thr-137. At Ser-138 the chain carries Phosphoserine. Residues 185–210 form a disordered region; the sequence is KAPEEGNNNNDEKEMSTETSEPHKTD. The span at 194–210 shows a compositional bias: basic and acidic residues; it reads NDEKEMSTETSEPHKTD. The JmjC domain maps to 307 to 452; the sequence is CSIRLLHASA…NLLETLMPMV (146 aa). Fe cation contacts are provided by His-353, Asp-355, and His-418.

The protein belongs to the ROX family. NO66 subfamily. Requires Fe(2+) as cofactor.

It is found in the nucleus. The enzyme catalyses N(6),N(6)-dimethyl-L-lysyl(36)-[histone H3] + 2 2-oxoglutarate + 2 O2 = L-lysyl(36)-[histone H3] + 2 formaldehyde + 2 succinate + 2 CO2. In terms of biological role, oxygenase that can act as both a histone lysine demethylase and a ribosomal histidine hydroxylase. Specifically demethylates 'Lys-4' (H3K4me) and 'Lys-36' (H3K36me) of histone H3, thereby playing a central role in histone code. The protein is Bifunctional lysine-specific demethylase and histidyl-hydroxylase NO66 of Drosophila sechellia (Fruit fly).